Consider the following 646-residue polypeptide: DEAD-box ATP-dependent RNA helicase 52 (646 aa).

Disordered stretches follow at residues 1–64 (MSSN…ANSG) and 76–117 (GSGY…PAVN). S2 is modified (N-acetylserine). 2 stretches are compositionally biased toward gly residues: residues 54 to 64 (DRGGYGGANSG) and 76 to 87 (GSGYGGRGGPVG). The Q motif signature appears at 146–174 (NTFAEIDLGEALNLNIQRCKYVKPTPVQR). Positions 177 to 361 (IPILAAGRDL…SDFLSNYIFL (185 aa)) constitute a Helicase ATP-binding domain. 190–197 (AQTGSGKT) contributes to the ATP binding site. The DEAD box signature appears at 305–308 (DEAD). The Helicase C-terminal domain maps to 388 to 539 (HLMDLLHAQR…EVPDWLTRYA (152 aa)).

The protein belongs to the DEAD box helicase family. DDX3/DED1 subfamily.

It carries out the reaction ATP + H2O = ADP + phosphate + H(+). The sequence is that of DEAD-box ATP-dependent RNA helicase 52 (RH52) from Arabidopsis thaliana (Mouse-ear cress).